A 359-amino-acid chain; its full sequence is Photosystem II protein D1 3 (359 aa).

Helical transmembrane passes span 29–46 (YVGWFGVLMIPTLLAATI), 118–133 (HFLIGIYAYMGREWEL), and 142–156 (WICVAYSAPVAAASA). Histidine 118 serves as a coordination point for chlorophyll a. Residue tyrosine 126 coordinates pheophytin a. [CaMn4O5] cluster is bound by residues aspartate 170 and glutamate 189. A helical transmembrane segment spans residues 197 to 218 (FHMLGVAGVFGGSLFSAMHGSL). A chlorophyll a-binding site is contributed by histidine 198. A quinone is bound by residues histidine 215 and 264 to 265 (SF). Residue histidine 215 participates in Fe cation binding. Residue histidine 272 participates in Fe cation binding. Residues 274–288 (FLAAWPVVGIWFTAL) form a helical membrane-spanning segment. [CaMn4O5] cluster contacts are provided by histidine 332, glutamate 333, aspartate 342, and alanine 344. The propeptide occupies 345-359 (AAESTPVALQVPAIG).

This sequence belongs to the reaction center PufL/M/PsbA/D family. PSII is composed of 1 copy each of membrane proteins PsbA, PsbB, PsbC, PsbD, PsbE, PsbF, PsbH, PsbI, PsbJ, PsbK, PsbL, PsbM, PsbT, PsbX, PsbY, PsbZ, Psb30/Ycf12, peripheral proteins PsbO, CyanoQ (PsbQ), PsbU, PsbV and a large number of cofactors. It forms dimeric complexes. It depends on The D1/D2 heterodimer binds P680, chlorophylls that are the primary electron donor of PSII, and subsequent electron acceptors. It shares a non-heme iron and each subunit binds pheophytin, quinone, additional chlorophylls, carotenoids and lipids. D1 provides most of the ligands for the Mn4-Ca-O5 cluster of the oxygen-evolving complex (OEC). There is also a Cl(-1) ion associated with D1 and D2, which is required for oxygen evolution. The PSII complex binds additional chlorophylls, carotenoids and specific lipids. as a cofactor. Tyr-161 forms a radical intermediate that is referred to as redox-active TyrZ, YZ or Y-Z. In terms of processing, C-terminally processed by CtpA; processing is essential to allow assembly of the oxygen-evolving complex and thus photosynthetic growth.

The protein localises to the cellular thylakoid membrane. It catalyses the reaction 2 a plastoquinone + 4 hnu + 2 H2O = 2 a plastoquinol + O2. In terms of biological role, photosystem II (PSII) is a light-driven water:plastoquinone oxidoreductase that uses light energy to abstract electrons from H(2)O, generating O(2) and a proton gradient subsequently used for ATP formation. It consists of a core antenna complex that captures photons, and an electron transfer chain that converts photonic excitation into a charge separation. The D1/D2 (PsbA/PsbD) reaction center heterodimer binds P680, the primary electron donor of PSII as well as several subsequent electron acceptors. This is Photosystem II protein D1 3 from Parasynechococcus marenigrum (strain WH8102).